We begin with the raw amino-acid sequence, 485 residues long: Probable cobyric acid synthase (485 aa).

In terms of domain architecture, GATase cobBQ-type spans glutamate 250–isoleucine 435. Cysteine 328 serves as the catalytic Nucleophile. Histidine 427 is an active-site residue.

It belongs to the CobB/CobQ family. CobQ subfamily.

Its pathway is cofactor biosynthesis; adenosylcobalamin biosynthesis. In terms of biological role, catalyzes amidations at positions B, D, E, and G on adenosylcobyrinic A,C-diamide. NH(2) groups are provided by glutamine, and one molecule of ATP is hydrogenolyzed for each amidation. This is Probable cobyric acid synthase from Methanosarcina acetivorans (strain ATCC 35395 / DSM 2834 / JCM 12185 / C2A).